Reading from the N-terminus, the 429-residue chain is Cyclin-B2-1 (429 aa).

This sequence belongs to the cyclin family. Cyclin AB subfamily. In terms of assembly, interacts with CDC20-1 and CDC20-2. Expressed in roots, stems, leaves, flowers and siliques.

The protein is Cyclin-B2-1 (CYCB2-1) of Arabidopsis thaliana (Mouse-ear cress).